We begin with the raw amino-acid sequence, 355 residues long: UDP-N-acetylglucosamine--N-acetylmuramyl-(pentapeptide) pyrophosphoryl-undecaprenol N-acetylglucosamine transferase (355 aa).

Residues 11–13, Asn120, Arg161, Ser188, and Gln280 contribute to the UDP-N-acetyl-alpha-D-glucosamine site; that span reads TGG.

This sequence belongs to the glycosyltransferase 28 family. MurG subfamily.

Its subcellular location is the cell inner membrane. It carries out the reaction di-trans,octa-cis-undecaprenyl diphospho-N-acetyl-alpha-D-muramoyl-L-alanyl-D-glutamyl-meso-2,6-diaminopimeloyl-D-alanyl-D-alanine + UDP-N-acetyl-alpha-D-glucosamine = di-trans,octa-cis-undecaprenyl diphospho-[N-acetyl-alpha-D-glucosaminyl-(1-&gt;4)]-N-acetyl-alpha-D-muramoyl-L-alanyl-D-glutamyl-meso-2,6-diaminopimeloyl-D-alanyl-D-alanine + UDP + H(+). It functions in the pathway cell wall biogenesis; peptidoglycan biosynthesis. In terms of biological role, cell wall formation. Catalyzes the transfer of a GlcNAc subunit on undecaprenyl-pyrophosphoryl-MurNAc-pentapeptide (lipid intermediate I) to form undecaprenyl-pyrophosphoryl-MurNAc-(pentapeptide)GlcNAc (lipid intermediate II). This Prochlorococcus marinus (strain MIT 9211) protein is UDP-N-acetylglucosamine--N-acetylmuramyl-(pentapeptide) pyrophosphoryl-undecaprenol N-acetylglucosamine transferase.